Consider the following 261-residue polypeptide: 3-hydroxyacyl-CoA dehydrogenase type-2 (261 aa).

The residue at position 2 (alanine 2) is an N-acetylalanine. 3 residues coordinate NAD(+): serine 20, leucine 22, and aspartate 41. Position 53 is an N6-acetyllysine; alternate (lysine 53). N6-succinyllysine; alternate is present on lysine 53. Valine 65 provides a ligand contact to NAD(+). At lysine 69 the chain carries N6-acetyllysine. NAD(+) is bound at residue cysteine 91. N6-acetyllysine occurs at positions 99 and 105. Residue serine 155 coordinates substrate. Tyrosine 168, lysine 172, phenylalanine 201, and threonine 203 together coordinate NAD(+). The active-site Proton acceptor is the tyrosine 168. N6-acetyllysine; alternate is present on lysine 212. Lysine 212 is modified (N6-succinyllysine; alternate).

This sequence belongs to the short-chain dehydrogenases/reductases (SDR) family. Homotetramer. Component of mitochondrial ribonuclease P, a complex composed of TRMT10C/MRPP1, HSD17B10/MRPP2 and PRORP/MRPP3. Interacts with TRMT10C/MRPP1; forming the MRPP1-MRPP2 subcomplex of the mitochondrial ribonuclease P complex.

It is found in the mitochondrion. The protein localises to the mitochondrion matrix. The protein resides in the mitochondrion nucleoid. It catalyses the reaction a (3S)-3-hydroxyacyl-CoA + NAD(+) = a 3-oxoacyl-CoA + NADH + H(+). It carries out the reaction (2S,3S)-3-hydroxy-2-methylbutanoyl-CoA + NAD(+) = 2-methyl-3-oxobutanoyl-CoA + NADH + H(+). The enzyme catalyses testosterone + NAD(+) = androst-4-ene-3,17-dione + NADH + H(+). The catalysed reaction is 5alpha-androstane-3alpha,17beta-diol + NAD(+) = 17beta-hydroxy-5alpha-androstan-3-one + NADH + H(+). It catalyses the reaction 17beta-estradiol + NAD(+) = estrone + NADH + H(+). It carries out the reaction cholate + NAD(+) = 3alpha,12alpha-dihydroxy-7-oxo-5beta-cholanate + NADH + H(+). The enzyme catalyses (3S)-3-hydroxybutanoyl-CoA + NAD(+) = acetoacetyl-CoA + NADH + H(+). The catalysed reaction is (3S)-hydroxyoctanoyl-CoA + NAD(+) = 3-oxooctanoyl-CoA + NADH + H(+). It catalyses the reaction (3S)-hydroxyhexadecanoyl-CoA + NAD(+) = 3-oxohexadecanoyl-CoA + NADH + H(+). It carries out the reaction 17beta-hydroxy-5alpha-androstan-3-one + NAD(+) = 5alpha-androstan-3,17-dione + NADH + H(+). The enzyme catalyses 5alpha-pregnan-20beta-ol-3-one + NAD(+) = 5alpha-pregnane-3,20-dione + NADH + H(+). The catalysed reaction is 3alpha-hydroxy-5alpha-pregnan-20-one + NAD(+) = 5alpha-pregnane-3,20-dione + NADH + H(+). It catalyses the reaction cortisone + NAD(+) = 17alpha-hydroxypregn-4-en-3,11,20-trione-21-al + NADH + H(+). It carries out the reaction 11-dehydrocorticosterone + NAD(+) = pregn-4-ene-3,11,20,21-tetraone + NADH + H(+). The enzyme catalyses cortisol + NAD(+) = 11beta,17alpha-dihydroxypregn-4-ene-3,20,21-trione + NADH + H(+). The catalysed reaction is chenodeoxycholate + NAD(+) = 7-oxolithocholate + NADH + H(+). It catalyses the reaction ursodeoxycholate + NAD(+) = 7-oxolithocholate + NADH + H(+). It carries out the reaction 3beta,7beta-dihydroxy-5beta-cholan-24-oate + NAD(+) = 3beta-hydroxy-7-oxo-5beta-cholan-24-oate + NADH + H(+). Its pathway is amino-acid degradation; L-isoleucine degradation. The protein operates within lipid metabolism; fatty acid beta-oxidation. It participates in steroid metabolism. It functions in the pathway lipid metabolism; bile acid biosynthesis. Functionally, mitochondrial dehydrogenase involved in pathways of fatty acid, branched-chain amino acid and steroid metabolism. Acts as (S)-3-hydroxyacyl-CoA dehydrogenase in mitochondrial fatty acid beta-oxidation, a major degradation pathway of fatty acids. Catalyzes the third step in the beta-oxidation cycle, namely the reversible conversion of (S)-3-hydroxyacyl-CoA to 3-ketoacyl-CoA. Preferentially accepts straight medium- and short-chain acyl-CoA substrates with highest efficiency for (3S)-hydroxybutanoyl-CoA. Acts as 3-hydroxy-2-methylbutyryl-CoA dehydrogenase in branched-chain amino acid catabolic pathway. Catalyzes the oxidation of 3-hydroxy-2-methylbutanoyl-CoA into 2-methyl-3-oxobutanoyl-CoA, a step in isoleucine degradation pathway. Has hydroxysteroid dehydrogenase activity toward steroid hormones and bile acids. Catalyzes the oxidation of 3alpha-, 17beta-, 20beta- and 21-hydroxysteroids and 7alpha- and 7beta-hydroxy bile acids. Oxidizes allopregnanolone/brexanolone at the 3alpha-hydroxyl group, which is known to be critical for the activation of gamma-aminobutyric acid receptors (GABAARs) chloride channel. Has phospholipase C-like activity toward cardiolipin and its oxidized species. Likely oxidizes the 2'-hydroxyl in the head group of cardiolipin to form a ketone intermediate that undergoes nucleophilic attack by water and fragments into diacylglycerol, dihydroxyacetone and orthophosphate. Has higher affinity for cardiolipin with oxidized fatty acids and may degrade these species during the oxidative stress response to protect cells from apoptosis. By interacting with intracellular amyloid-beta, it may contribute to the neuronal dysfunction associated with Alzheimer disease (AD). Essential for structural and functional integrity of mitochondria. In terms of biological role, in addition to mitochondrial dehydrogenase activity, moonlights as a component of mitochondrial ribonuclease P, a complex that cleaves tRNA molecules in their 5'-ends. Together with TRMT10C/MRPP1, forms a subcomplex of the mitochondrial ribonuclease P, named MRPP1-MRPP2 subcomplex, which displays functions that are independent of the ribonuclease P activity. The MRPP1-MRPP2 subcomplex catalyzes the formation of N(1)-methylguanine and N(1)-methyladenine at position 9 (m1G9 and m1A9, respectively) in tRNAs; HSD17B10/MRPP2 acting as a non-catalytic subunit. The MRPP1-MRPP2 subcomplex also acts as a tRNA maturation platform: following 5'-end cleavage by the mitochondrial ribonuclease P complex, the MRPP1-MRPP2 subcomplex enhances the efficiency of 3'-processing catalyzed by ELAC2, retains the tRNA product after ELAC2 processing and presents the nascent tRNA to the mitochondrial CCA tRNA nucleotidyltransferase TRNT1 enzyme. Associates with mitochondrial DNA complexes at the nucleoids to initiate RNA processing and ribosome assembly. The protein is 3-hydroxyacyl-CoA dehydrogenase type-2 (Hsd17b10) of Rattus norvegicus (Rat).